A 473-amino-acid chain; its full sequence is Sarcalumenin (473 aa).

Positions 1-20 are cleaved as a signal peptide; the sequence is MRALVLLGCLLASLLFSGQA. In terms of domain architecture, Dynamin-type G spans 90-331; sequence ITSKPMVLFL…IENRLENKIA (242 aa). Residues 100–107 are G1 motif; sequence GPWSVGKS. Residues 128–129 are G2 motif; sequence EP. The interval 190–193 is G3 motif; that stretch reads DTPG. The G4 motif stretch occupies residues 255-258; sequence NKAD. Residue Pro-278 is a region of interest, G5 motif. Residues Asn-281 and Asn-389 are each glycosylated (N-linked (GlcNAc...) asparagine).

Belongs to the TRAFAC class dynamin-like GTPase superfamily. Dynamin/Fzo/YdjA family. N-glycosylated.

It is found in the sarcoplasmic reticulum lumen. The protein resides in the sarcoplasmic reticulum membrane. The protein is Sarcalumenin (SRL) of Homo sapiens (Human).